The primary structure comprises 792 residues: Phenylalanine--tRNA ligase beta subunit (792 aa).

A tRNA-binding domain is found at G39 to A147. The B5 domain maps to P400–T475. Mg(2+) is bound by residues D453, D459, E462, and E463. Residues S698–R791 form the FDX-ACB domain.

This sequence belongs to the phenylalanyl-tRNA synthetase beta subunit family. Type 1 subfamily. As to quaternary structure, tetramer of two alpha and two beta subunits. Mg(2+) is required as a cofactor.

The protein resides in the cytoplasm. The enzyme catalyses tRNA(Phe) + L-phenylalanine + ATP = L-phenylalanyl-tRNA(Phe) + AMP + diphosphate + H(+). The protein is Phenylalanine--tRNA ligase beta subunit of Xylella fastidiosa (strain Temecula1 / ATCC 700964).